Here is a 294-residue protein sequence, read N- to C-terminus: S-methyl-5'-thioadenosine phosphorylase (294 aa).

Residues serine 16, 58–59, and 91–92 contribute to the phosphate site; these read RH and SA. Methionine 189 contacts substrate. Threonine 190 lines the phosphate pocket. 213–215 contributes to the substrate binding site; the sequence is DFD.

Belongs to the PNP/MTAP phosphorylase family. MTAP subfamily. Homohexamer. Dimer of a homotrimer.

The enzyme catalyses S-methyl-5'-thioadenosine + phosphate = 5-(methylsulfanyl)-alpha-D-ribose 1-phosphate + adenine. The catalysed reaction is 5'-deoxyadenosine + phosphate = 5-deoxy-alpha-D-ribose 1-phosphate + adenine. Its pathway is amino-acid biosynthesis; L-methionine biosynthesis via salvage pathway; S-methyl-5-thio-alpha-D-ribose 1-phosphate from S-methyl-5'-thioadenosine (phosphorylase route): step 1/1. Catalyzes the reversible phosphorylation of S-methyl-5'-thioadenosine (MTA) to adenine and 5-methylthioribose-1-phosphate. Involved in the breakdown of MTA, a major by-product of polyamine biosynthesis. Responsible for the first step in the methionine salvage pathway after MTA has been generated from S-adenosylmethionine. Has broad substrate specificity with 6-aminopurine nucleosides as preferred substrates. Also catalyzes the phosphorylation of 5'-deoxyadenosine (5'dAdo) to 5-deoxyribose 1-phosphate. Part of a bifunctional DHAP-shunt salvage pathway for SAM by-products. The protein is S-methyl-5'-thioadenosine phosphorylase of Rhodospirillum rubrum (strain ATCC 11170 / ATH 1.1.1 / DSM 467 / LMG 4362 / NCIMB 8255 / S1).